The primary structure comprises 212 residues: Protein-L-isoaspartate O-methyltransferase (212 aa).

Residue S62 is part of the active site.

This sequence belongs to the methyltransferase superfamily. L-isoaspartyl/D-aspartyl protein methyltransferase family.

It localises to the cytoplasm. The enzyme catalyses [protein]-L-isoaspartate + S-adenosyl-L-methionine = [protein]-L-isoaspartate alpha-methyl ester + S-adenosyl-L-homocysteine. Catalyzes the methyl esterification of L-isoaspartyl residues in peptides and proteins that result from spontaneous decomposition of normal L-aspartyl and L-asparaginyl residues. It plays a role in the repair and/or degradation of damaged proteins. This Pseudoalteromonas translucida (strain TAC 125) protein is Protein-L-isoaspartate O-methyltransferase.